The sequence spans 356 residues: MGSTCSSPESKEQNRINSIIDKQIRKDEDNEIGNQKLLLLGTGECGKSTILKQINILHSSGYTKTDLKNVAGTVYSNIIQGMATLIKAKDQFYHEVTSPELDADAQHILALAESSKDAMPFIPLTFNSIKRLWHDPTVQKTFERRAEFQMMDTLVYFMNEIDRINDPEYIPTVDDMLRIRIPTMGVVQQVIEIKGTKFRIFDVGGQRSERRKWIHLFDNVNATIFISAINEYNQKLNEDGNANRMKESIKLFETICNSRWFVQAAMILFLNKRDLFEQKLKTTSINVLFSTYLGSNDYAECVAYIQLRFERLNKYADVKKIYTHVTCATDTNQIQLVIDSVVDMVIGRNLRGTGME.

Gly-2 carries N-myristoyl glycine lipidation. The S-palmitoyl cysteine moiety is linked to residue Cys-5. Positions Gly-33–Glu-356 constitute a G-alpha domain. Residues Lys-36–Thr-49 form a G1 motif region. GTP-binding positions include Gly-41–Ser-48, Leu-177–Thr-183, Asp-202–Gln-206, Asn-271–Asp-274, and Ala-328. Residues Ser-48 and Thr-183 each contribute to the Mg(2+) site. Residues Asp-175–Thr-183 are G2 motif. A G3 motif region spans residues Phe-198–Arg-207. The interval Ile-267 to Asp-274 is G4 motif. Residues Thr-326–Thr-331 form a G5 motif region.

It belongs to the G-alpha family. In terms of assembly, g proteins are composed of 3 units; alpha, beta and gamma. The alpha chain contains the guanine nucleotide binding site.

In terms of biological role, guanine nucleotide-binding proteins (G proteins) are involved as modulators or transducers in various transmembrane signaling systems. The polypeptide is Guanine nucleotide-binding protein alpha-15 subunit (gpa-15) (Caenorhabditis briggsae).